Reading from the N-terminus, the 60-residue chain is Large ribosomal subunit protein bL32 (60 aa).

The disordered stretch occupies residues methionine 1–aspartate 60. The span at lysine 7 to arginine 16 shows a compositional bias: basic residues.

Belongs to the bacterial ribosomal protein bL32 family.

The sequence is that of Large ribosomal subunit protein bL32 from Francisella philomiragia subsp. philomiragia (strain ATCC 25017 / CCUG 19701 / FSC 153 / O#319-036).